The sequence spans 462 residues: Exodeoxyribonuclease 7 large subunit (462 aa).

Belongs to the XseA family. In terms of assembly, heterooligomer composed of large and small subunits.

The protein resides in the cytoplasm. The catalysed reaction is Exonucleolytic cleavage in either 5'- to 3'- or 3'- to 5'-direction to yield nucleoside 5'-phosphates.. In terms of biological role, bidirectionally degrades single-stranded DNA into large acid-insoluble oligonucleotides, which are then degraded further into small acid-soluble oligonucleotides. This Proteus mirabilis (strain HI4320) protein is Exodeoxyribonuclease 7 large subunit.